We begin with the raw amino-acid sequence, 331 residues long: Peroxidase 69 (331 aa).

Residues 1–23 (MGRGYNLLFVLVTFLVLVAAVTA) form the signal peptide. 4 disulfide bridges follow: cysteine 46–cysteine 122, cysteine 79–cysteine 84, cysteine 128–cysteine 327, and cysteine 205–cysteine 237. Histidine 77 functions as the Proton acceptor in the catalytic mechanism. Ca(2+) is bound by residues aspartate 78, valine 81, glycine 83, aspartate 85, and serine 87. The N-linked (GlcNAc...) asparagine glycan is linked to asparagine 93. Proline 168 provides a ligand contact to substrate. Residue histidine 198 coordinates heme b. Ca(2+) is bound at residue threonine 199. Asparagine 216 is a glycosylation site (N-linked (GlcNAc...) asparagine). Ca(2+) contacts are provided by aspartate 248, serine 251, and aspartate 256.

It belongs to the peroxidase family. Classical plant (class III) peroxidase subfamily. The cofactor is heme b. Requires Ca(2+) as cofactor. Mainly expressed in roots and slightly in leaves.

It is found in the secreted. It carries out the reaction 2 a phenolic donor + H2O2 = 2 a phenolic radical donor + 2 H2O. Removal of H(2)O(2), oxidation of toxic reductants, biosynthesis and degradation of lignin, suberization, auxin catabolism, response to environmental stresses such as wounding, pathogen attack and oxidative stress. These functions might be dependent on each isozyme/isoform in each plant tissue. This is Peroxidase 69 (PER69) from Arabidopsis thaliana (Mouse-ear cress).